The chain runs to 279 residues: Universal stress protein MT2087 (279 aa).

This sequence belongs to the universal stress protein A family.

The protein is Universal stress protein MT2087 of Mycobacterium tuberculosis (strain CDC 1551 / Oshkosh).